Here is a 1146-residue protein sequence, read N- to C-terminus: Ankyrin repeat domain-containing protein 24 (1146 aa).

ANK repeat units lie at residues 81–110 (EGKS…NVMS), 114–143 (AGYN…VVDV), 147–176 (SGWT…HLNP), 180–209 (SGAT…AAND), and 213–242 (QGRT…QPGI). Disordered stretches follow at residues 272 to 320 (RPSP…PDDR), 607 to 627 (REME…GAQA), and 766 to 785 (ERVR…GDTT). The segment covering 286–297 (EASSQNSMSSHG) has biased composition (polar residues). Residues 320–517 (RDAYEEIVRL…QALRQQETRE (198 aa)) are a coiled coil. Residues 714-1110 (AAEASEKLQV…AARDHSSVVA (397 aa)) are a coiled coil.

In terms of assembly, homodimer. Interacts (via C-terminal domain) with TRIOBP (via C-terminal domain) isoform 4; recruits TRIOBP isoform 4 to stereocilia rootlets.

The protein resides in the cell membrane. It localises to the cell projection. The protein localises to the stereocilium. Component of the stereocilia rootlet in hair cells of inner ear. Bridges the apical plasma membrane with the lower rootlet and maintains normal distribution of TRIOBP, thereby reinforcing stereocilia insertion points and organizing rootlets for hearing with long-term resilience. The polypeptide is Ankyrin repeat domain-containing protein 24 (Homo sapiens (Human)).